Consider the following 442-residue polypeptide: Histidine--tRNA ligase (442 aa).

The protein belongs to the class-II aminoacyl-tRNA synthetase family. Homodimer.

The protein localises to the cytoplasm. It carries out the reaction tRNA(His) + L-histidine + ATP = L-histidyl-tRNA(His) + AMP + diphosphate + H(+). The polypeptide is Histidine--tRNA ligase (Psychrobacter arcticus (strain DSM 17307 / VKM B-2377 / 273-4)).